A 96-amino-acid polypeptide reads, in one-letter code: Conantokin Rl-B (96 aa).

Positions methionine 1–glycine 21 are cleaved as a signal peptide. Positions threonine 22–arginine 78 are excised as a propeptide. Residues lysine 51–asparagine 96 are disordered. Basic and acidic residues predominate over residues alanine 77–asparagine 96. A divalent metal cation is bound at residue glutamate 81. 4-carboxyglutamate is present on residues glutamate 81, glutamate 82, and glutamate 85. Glutamate 85 contacts a divalent metal cation. Proline 88 bears the 4-hydroxyproline mark. Residues glutamate 89 and glutamate 93 each contribute to the a divalent metal cation site. Residues glutamate 89 and glutamate 93 each carry the 4-carboxyglutamate modification. At asparagine 96 the chain carries Asparagine amide.

It belongs to the conotoxin B superfamily. Ca(2+) serves as cofactor. The cofactor is Mg(2+). Post-translationally, hydroxylation of Pro-88 is important for NR2B/GRIN2B NMDA receptor selectivity. Removal of hydroxylation does not change global NMDA receptor antagonism (tested on WT neurons), but it decreases the inhibitory potency on NR2B/GRIN2B NMDA receptors and increases the inhibitory potency on NR2A/GRIN2A NMDA receptors. Hydroxylation of Pro-88 locally disrupts a small region of the divalent cation-induced alpha-helix but does not destabilize the entire helix. In terms of tissue distribution, expressed by the venom duct.

The protein resides in the secreted. Functionally, conantokins inhibit N-methyl-D-aspartate (NMDA) receptors. This toxin has antagonist activity on the NR2B/GRIN2B subunit (IC(50)=0.1 uM). In vivo, when delivered into the brain, is active has anticonvulsant activity in the model of epilepsy in mice. This is Conantokin Rl-B from Conus rolani (Cone snail).